Reading from the N-terminus, the 132-residue chain is Large ribosomal subunit protein uL24 (132 aa).

This sequence belongs to the universal ribosomal protein uL24 family. In terms of assembly, part of the 50S ribosomal subunit.

One of two assembly initiator proteins, it binds directly to the 5'-end of the 23S rRNA, where it nucleates assembly of the 50S subunit. Its function is as follows. One of the proteins that surrounds the polypeptide exit tunnel on the outside of the subunit. This is Large ribosomal subunit protein uL24 from Aquifex aeolicus (strain VF5).